Here is a 128-residue protein sequence, read N- to C-terminus: Probable 4-amino-4-deoxy-L-arabinose-phosphoundecaprenol flippase subunit ArnF (128 aa).

At 1–2 (MG) the chain is on the cytoplasmic side. The helical transmembrane segment at 3-23 (LIWGLFSVIIASVAQLSLGFA) threads the bilayer. At 24–35 (ASHLPPMTHLWD) the chain is on the periplasmic side. A helical membrane pass occupies residues 36 to 56 (FIAALLAFGLDARILLLGLLG). The Cytoplasmic segment spans residues 57–76 (YLLSVFCWYKTLHKLALSKA). The helical transmembrane segment at 77–97 (YALLSMSYVLVWIASMVLPGW) threads the bilayer. The Periplasmic segment spans residues 98-100 (EGT). The helical transmembrane segment at 101–121 (FSLKALLGVACIMSGLMLIFL) threads the bilayer. The Cytoplasmic portion of the chain corresponds to 122–128 (PMTKQRY).

Belongs to the ArnF family. In terms of assembly, heterodimer of ArnE and ArnF.

Its subcellular location is the cell inner membrane. The protein operates within bacterial outer membrane biogenesis; lipopolysaccharide biosynthesis. Translocates 4-amino-4-deoxy-L-arabinose-phosphoundecaprenol (alpha-L-Ara4N-phosphoundecaprenol) from the cytoplasmic to the periplasmic side of the inner membrane. This chain is Probable 4-amino-4-deoxy-L-arabinose-phosphoundecaprenol flippase subunit ArnF, found in Escherichia coli O9:H4 (strain HS).